The sequence spans 405 residues: Argininosuccinate synthase (405 aa).

Residues 10–18 (AYSGGLDTS) and Ala-37 each bind ATP. The L-citrulline site is built by Tyr-88 and Ser-93. Gly-118 serves as a coordination point for ATP. Thr-120, Asn-124, and Asp-125 together coordinate L-aspartate. Asn-124 contributes to the L-citrulline binding site. L-citrulline contacts are provided by Arg-128, Ser-179, Ser-188, Glu-264, and Tyr-276.

This sequence belongs to the argininosuccinate synthase family. Type 1 subfamily. Homotetramer.

It localises to the cytoplasm. It catalyses the reaction L-citrulline + L-aspartate + ATP = 2-(N(omega)-L-arginino)succinate + AMP + diphosphate + H(+). It participates in amino-acid biosynthesis; L-arginine biosynthesis; L-arginine from L-ornithine and carbamoyl phosphate: step 2/3. The chain is Argininosuccinate synthase from Pseudomonas fluorescens (strain SBW25).